A 948-amino-acid polypeptide reads, in one-letter code: UvrABC system protein A (948 aa).

31–38 is an ATP binding site; it reads GLSGSGKS. The segment at 249–277 adopts a C4-type zinc-finger fold; the sequence is CPNGHDIGFTELSPRMFSFNSPYGACETC. ABC transporter domains lie at 307-586 and 606-934; these read WAGS…KNSL and GNGS…QYLK. 638–645 provides a ligand contact to ATP; that stretch reads GVSGSGKS. The segment at 737–763 adopts a C4-type zinc-finger fold; that stretch reads CETCEGDGILKIEMHFLPDVYVTCEVC.

Belongs to the ABC transporter superfamily. UvrA family. As to quaternary structure, forms a heterotetramer with UvrB during the search for lesions.

The protein resides in the cytoplasm. In terms of biological role, the UvrABC repair system catalyzes the recognition and processing of DNA lesions. UvrA is an ATPase and a DNA-binding protein. A damage recognition complex composed of 2 UvrA and 2 UvrB subunits scans DNA for abnormalities. When the presence of a lesion has been verified by UvrB, the UvrA molecules dissociate. The protein is UvrABC system protein A of Leptospira interrogans serogroup Icterohaemorrhagiae serovar copenhageni (strain Fiocruz L1-130).